A 147-amino-acid polypeptide reads, in one-letter code: Large ribosomal subunit protein uL13 (147 aa).

The protein belongs to the universal ribosomal protein uL13 family. As to quaternary structure, part of the 50S ribosomal subunit.

This protein is one of the early assembly proteins of the 50S ribosomal subunit, although it is not seen to bind rRNA by itself. It is important during the early stages of 50S assembly. The polypeptide is Large ribosomal subunit protein uL13 (Frankia casuarinae (strain DSM 45818 / CECT 9043 / HFP020203 / CcI3)).